Reading from the N-terminus, the 527-residue chain is Plant-specific TFIIB-related protein PTF2 (527 aa).

The TFIIB-type zinc finger occupies 1–30 (MRCKRCNGSNFERDEDTGNSYCGGCGTLRE).

As to quaternary structure, can form homodimer. Interacts with TBP2. Expressed in shoot apical meristems, root tips, primordia of lateral roots, inflorescences, developing pollen grains and embryos.

It localises to the nucleus. Plant-specific TFIIB-related protein that plays important roles in pollen germination and embryogenesis, possibly by regulating gene expression through interaction with TBP2 and the subunits of RNA polymerases. Binds double-stranded DNA in vitro. This Arabidopsis thaliana (Mouse-ear cress) protein is Plant-specific TFIIB-related protein PTF2.